The following is a 75-amino-acid chain: Small ribosomal subunit protein bS18 (75 aa).

Belongs to the bacterial ribosomal protein bS18 family. In terms of assembly, part of the 30S ribosomal subunit. Forms a tight heterodimer with protein bS6.

Functionally, binds as a heterodimer with protein bS6 to the central domain of the 16S rRNA, where it helps stabilize the platform of the 30S subunit. The sequence is that of Small ribosomal subunit protein bS18 from Psychromonas ingrahamii (strain DSM 17664 / CCUG 51855 / 37).